The following is a 542-amino-acid chain: ATP synthase subunit alpha (542 aa).

176-183 provides a ligand contact to ATP; that stretch reads GDRQTGKT.

Belongs to the ATPase alpha/beta chains family. As to quaternary structure, F-type ATPases have 2 components, CF(1) - the catalytic core - and CF(0) - the membrane proton channel. CF(1) has five subunits: alpha(3), beta(3), gamma(1), delta(1), epsilon(1). CF(0) has three main subunits: a(1), b(2) and c(9-12). The alpha and beta chains form an alternating ring which encloses part of the gamma chain. CF(1) is attached to CF(0) by a central stalk formed by the gamma and epsilon chains, while a peripheral stalk is formed by the delta and b chains.

Its subcellular location is the cell membrane. The catalysed reaction is ATP + H2O + 4 H(+)(in) = ADP + phosphate + 5 H(+)(out). In terms of biological role, produces ATP from ADP in the presence of a proton gradient across the membrane. The alpha chain is a regulatory subunit. The polypeptide is ATP synthase subunit alpha (Tropheryma whipplei (strain TW08/27) (Whipple's bacillus)).